The sequence spans 251 residues: Triosephosphate isomerase (251 aa).

Residue 9–11 participates in substrate binding; the sequence is NWK. His95 serves as the catalytic Electrophile. Catalysis depends on Glu167, which acts as the Proton acceptor. Substrate is bound by residues Gly173, Ser213, and 234-235; that span reads GG.

It belongs to the triosephosphate isomerase family. As to quaternary structure, homodimer.

It is found in the cytoplasm. The enzyme catalyses D-glyceraldehyde 3-phosphate = dihydroxyacetone phosphate. It participates in carbohydrate biosynthesis; gluconeogenesis. It functions in the pathway carbohydrate degradation; glycolysis; D-glyceraldehyde 3-phosphate from glycerone phosphate: step 1/1. In terms of biological role, involved in the gluconeogenesis. Catalyzes stereospecifically the conversion of dihydroxyacetone phosphate (DHAP) to D-glyceraldehyde-3-phosphate (G3P). The polypeptide is Triosephosphate isomerase (Enterococcus faecalis (strain ATCC 700802 / V583)).